The chain runs to 119 residues: MARVKRAMNARKKHKKILKLSKGYFGGKSRLFKTANESVIRALRNAYTGRKLKKRDYRKLWIARINAATRANGLSYSRFMNGLKLAGIDMNRKMLSEIAINDPKAFSELVEAAKKQLNA.

Belongs to the bacterial ribosomal protein bL20 family.

In terms of biological role, binds directly to 23S ribosomal RNA and is necessary for the in vitro assembly process of the 50S ribosomal subunit. It is not involved in the protein synthesizing functions of that subunit. This is Large ribosomal subunit protein bL20 from Clostridium tetani (strain Massachusetts / E88).